Reading from the N-terminus, the 155-residue chain is Trypsin/factor XIIA inhibitor (155 aa).

Positions 1–28 (MASSSSSSHRRLILAAAVLLSVLAAASA) are cleaved as a signal peptide. 5 disulfides stabilise this stretch: C34/C83, C48/C72, C57/C114, C73/C132, and C85/C143. R62 is an active-site residue. Residues 139–155 (GVAECPWILGGGTMPSK) constitute a propeptide, C-terminal peptide.

This sequence belongs to the protease inhibitor I6 (cereal trypsin/alpha-amylase inhibitor) family. Monomer.

The protein localises to the secreted. Potent inhibitor of mammalian trypsin and a specific inhibitor of factor XIIa (activated hageman factor). This Zea mays (Maize) protein is Trypsin/factor XIIA inhibitor.